Here is an 88-residue protein sequence, read N- to C-terminus: MEKGLLSNFWNDFKRWSEDRKVEIVIWWSNLESKVRLGFWIILIILLGILAIRIAIKVYQCVKFTNQGVKKIKRIIKRKRSIKKYRKT.

The helical transmembrane segment at 38 to 58 (GFWIILIILLGILAIRIAIKV) threads the bilayer.

The protein localises to the membrane. In Bos taurus (Bovine), this protein is Protein alpha-1 (alpha).